Here is a 179-residue protein sequence, read N- to C-terminus: Large ribosomal subunit protein uL6 (179 aa).

Belongs to the universal ribosomal protein uL6 family. Part of the 50S ribosomal subunit.

Functionally, this protein binds to the 23S rRNA, and is important in its secondary structure. It is located near the subunit interface in the base of the L7/L12 stalk, and near the tRNA binding site of the peptidyltransferase center. This Trichodesmium erythraeum (strain IMS101) protein is Large ribosomal subunit protein uL6.